A 304-amino-acid polypeptide reads, in one-letter code: Methionyl-tRNA formyltransferase (304 aa).

Position 110 to 113 (110 to 113) interacts with (6S)-5,6,7,8-tetrahydrofolate; that stretch reads SLLP.

It belongs to the Fmt family.

It catalyses the reaction L-methionyl-tRNA(fMet) + (6R)-10-formyltetrahydrofolate = N-formyl-L-methionyl-tRNA(fMet) + (6S)-5,6,7,8-tetrahydrofolate + H(+). Attaches a formyl group to the free amino group of methionyl-tRNA(fMet). The formyl group appears to play a dual role in the initiator identity of N-formylmethionyl-tRNA by promoting its recognition by IF2 and preventing the misappropriation of this tRNA by the elongation apparatus. The sequence is that of Methionyl-tRNA formyltransferase from Sulfurovum sp. (strain NBC37-1).